A 161-amino-acid polypeptide reads, in one-letter code: Large ribosomal subunit protein uL10 (161 aa).

It belongs to the universal ribosomal protein uL10 family. As to quaternary structure, part of the ribosomal stalk of the 50S ribosomal subunit. The N-terminus interacts with L11 and the large rRNA to form the base of the stalk. The C-terminus forms an elongated spine to which L12 dimers bind in a sequential fashion forming a multimeric L10(L12)X complex.

Forms part of the ribosomal stalk, playing a central role in the interaction of the ribosome with GTP-bound translation factors. This chain is Large ribosomal subunit protein uL10, found in Buchnera aphidicola subsp. Cinara cedri (strain Cc).